The primary structure comprises 1077 residues: Endo-1,4-beta-xylanase Y (1077 aa).

The signal sequence occupies residues methionine 1 to asparagine 26. Residues aspartate 33–lysine 180 enclose the CBM-cenC 1 domain. One can recognise a GH10 domain in the interval tyrosine 189 to isoleucine 538. Glutamate 337 acts as the Proton donor in catalysis. Glutamate 460 (nucleophile) is an active-site residue. Residues glutamate 543–aspartate 563 are disordered. A CBM-cenC 2 domain is found at asparagine 565–alanine 714. The Dockerin domain maps to proline 728–valine 796.

It belongs to the glycosyl hydrolase 10 (cellulase F) family.

The enzyme catalyses Endohydrolysis of (1-&gt;4)-beta-D-xylosidic linkages in xylans.. The protein is Endo-1,4-beta-xylanase Y (xynY) of Acetivibrio thermocellus (Hungateiclostridium thermocellum).